The chain runs to 566 residues: Ubiquitin carboxyl-terminal hydrolase 21 (566 aa).

2 stretches are compositionally biased toward basic and acidic residues: residues 1 to 14 (MPQA…RTRE) and 58 to 70 (PPDE…ELGR). Disordered regions lie at residues 1-103 (MPQA…LPLP) and 146-169 (PEPP…PPTL). Low complexity-rich tracts occupy residues 71 to 81 (GRTSGSRPRGP) and 151 to 160 (LRRSTSLRRL). Residues 134–152 (ELGAALSRLALRPEPPTLR) carry the Nuclear export signal motif. A USP domain is found at 212-559 (VGLRNLGNTC…EGYVLFYQLM (348 aa)). Residue Cys-221 is the Nucleophile of the active site. Positions 324–349 (APPILASGPVPSPPRRGGGALHEEPE) are disordered. 4 residues coordinate Zn(2+): Cys-385, Cys-388, Cys-438, and Cys-441. His-519 acts as the Proton acceptor in catalysis.

It belongs to the peptidase C19 family. USP21 subfamily. In terms of assembly, interacts with BEND3.

It localises to the cytoplasm. The protein resides in the nucleus. It carries out the reaction Thiol-dependent hydrolysis of ester, thioester, amide, peptide and isopeptide bonds formed by the C-terminal Gly of ubiquitin (a 76-residue protein attached to proteins as an intracellular targeting signal).. Functionally, deubiquitinates histone H2A, a specific tag for epigenetic transcriptional repression, thereby acting as a coactivator. Deubiquitination of histone H2A releaves the repression of di- and trimethylation of histone H3 at 'Lys-4', resulting in regulation of transcriptional initiation. Regulates gene expression via histone H2A deubiquitination. Deubiquitinates BAZ2A/TIP5 leading to its stabilization. Also capable of removing NEDD8 from NEDD8 conjugates but has no effect on Sentrin-1 conjugates. Also acts as a negative regulator of the ribosome quality control (RQC) by mediating deubiquitination of 40S ribosomal proteins RPS10/eS10 and RPS20/uS10, thereby antagonizing ZNF598-mediated 40S ubiquitination. The chain is Ubiquitin carboxyl-terminal hydrolase 21 from Mus musculus (Mouse).